The primary structure comprises 255 residues: Imidazole glycerol phosphate synthase subunit HisF (255 aa).

Residues aspartate 12 and aspartate 131 contribute to the active site.

It belongs to the HisA/HisF family. As to quaternary structure, heterodimer of HisH and HisF.

It localises to the cytoplasm. It catalyses the reaction 5-[(5-phospho-1-deoxy-D-ribulos-1-ylimino)methylamino]-1-(5-phospho-beta-D-ribosyl)imidazole-4-carboxamide + L-glutamine = D-erythro-1-(imidazol-4-yl)glycerol 3-phosphate + 5-amino-1-(5-phospho-beta-D-ribosyl)imidazole-4-carboxamide + L-glutamate + H(+). Its pathway is amino-acid biosynthesis; L-histidine biosynthesis; L-histidine from 5-phospho-alpha-D-ribose 1-diphosphate: step 5/9. Functionally, IGPS catalyzes the conversion of PRFAR and glutamine to IGP, AICAR and glutamate. The HisF subunit catalyzes the cyclization activity that produces IGP and AICAR from PRFAR using the ammonia provided by the HisH subunit. The chain is Imidazole glycerol phosphate synthase subunit HisF from Salinispora arenicola (strain CNS-205).